Consider the following 37-residue polypeptide: Large ribosomal subunit protein bL36 (37 aa).

This sequence belongs to the bacterial ribosomal protein bL36 family.

This Variovorax paradoxus (strain S110) protein is Large ribosomal subunit protein bL36.